Here is a 276-residue protein sequence, read N- to C-terminus: Glutamate 5-kinase (276 aa).

An ATP-binding site is contributed by K14. Substrate contacts are provided by S54, D141, and N157. Residues S177–D178 and T219–K225 each bind ATP.

The protein belongs to the glutamate 5-kinase family.

The protein resides in the cytoplasm. The catalysed reaction is L-glutamate + ATP = L-glutamyl 5-phosphate + ADP. Its pathway is amino-acid biosynthesis; L-proline biosynthesis; L-glutamate 5-semialdehyde from L-glutamate: step 1/2. Its function is as follows. Catalyzes the transfer of a phosphate group to glutamate to form L-glutamate 5-phosphate. The polypeptide is Glutamate 5-kinase (Listeria monocytogenes serovar 1/2a (strain ATCC BAA-679 / EGD-e)).